A 589-amino-acid chain; its full sequence is Arylsulfatase L (589 aa).

Residues 1–31 form the signal peptide; sequence MLHLHHSCLCFRSWLPAMLAVLLSLAPSASS. Ca(2+)-binding residues include Asp46 and Asp47. N-linked (GlcNAc...) asparagine glycosylation occurs at Asn58. Cys86 is a Ca(2+) binding site. The Nucleophile role is filled by Cys86. 3-oxoalanine (Cys) is present on Cys86. Residue Asn125 is glycosylated (N-linked (GlcNAc...) asparagine). Position 145 (Lys145) interacts with substrate. His147 is a catalytic residue. An N-linked (GlcNAc...) asparagine glycan is attached at Asn258. A substrate-binding site is contributed by His301. N-linked (GlcNAc...) asparagine glycosylation is present at Asn344. Positions 353 and 354 each coordinate Ca(2+). Lys378 is a binding site for substrate.

This sequence belongs to the sulfatase family. It depends on Ca(2+) as a cofactor. Post-translationally, N-glycosylated. The conversion to 3-oxoalanine (also known as C-formylglycine, FGly), of a serine or cysteine residue in prokaryotes and of a cysteine residue in eukaryotes, is critical for catalytic activity. In terms of tissue distribution, expressed in the pancreas, liver and kidney.

It is found in the golgi apparatus. It localises to the golgi stack. It carries out the reaction an aryl sulfate + H2O = a phenol + sulfate + H(+). With respect to regulation, inhibited by millimolar concentrations of warfarin. Exhibits arylsulfatase activity towards the artificial substrate 4-methylumbelliferyl sulfate. May be essential for the correct composition of cartilage and bone matrix during development. Has no activity toward steroid sulfates. In Homo sapiens (Human), this protein is Arylsulfatase L.